The chain runs to 210 residues: MARYIGPKCKLSRREGTDLFLKSGIRPLESKCKADQAPGQAAGASGRRPARLSDYGVQLREKQKVRRTYGVLEKQFRSYYKKAAASKGATGEVLLQLLEGRLDNVVYRMGFGSTRSEARQLVSHRAILVNGQSVNVASYQVKPGDQINVREKSKNQLRVKNAMELAQQRGFMPWIEVDDKKLEGTYKAKPERIDLPAEINENLIVELYSK.

The S4 RNA-binding domain occupies G100 to K160.

This sequence belongs to the universal ribosomal protein uS4 family. Part of the 30S ribosomal subunit. Contacts protein S5. The interaction surface between S4 and S5 is involved in control of translational fidelity.

In terms of biological role, one of the primary rRNA binding proteins, it binds directly to 16S rRNA where it nucleates assembly of the body of the 30S subunit. Its function is as follows. With S5 and S12 plays an important role in translational accuracy. This is Small ribosomal subunit protein uS4 from Alcanivorax borkumensis (strain ATCC 700651 / DSM 11573 / NCIMB 13689 / SK2).